The sequence spans 62 residues: UPF0291 protein CLD_1956 (62 aa).

The protein belongs to the UPF0291 family.

It localises to the cytoplasm. In Clostridium botulinum (strain Okra / Type B1), this protein is UPF0291 protein CLD_1956.